A 235-amino-acid polypeptide reads, in one-letter code: Acyl-protein thioesterase 1 (235 aa).

Residues serine 119, aspartate 172, and histidine 206 each act as charge relay system in the active site.

It belongs to the AB hydrolase superfamily. AB hydrolase 2 family.

The protein resides in the cytoplasm. The protein localises to the nucleus. The enzyme catalyses S-hexadecanoyl-L-cysteinyl-[protein] + H2O = L-cysteinyl-[protein] + hexadecanoate + H(+). Functionally, hydrolyzes fatty acids from S-acylated cysteine residues in proteins with a strong preference for palmitoylated G-alpha proteins over other acyl substrates. Mediates the deacylation of G-alpha proteins such as GPA1 in vivo, but has weak or no activity toward palmitoylated Ras proteins. Has weak lysophospholipase activity in vitro; however such activity may not exist in vivo. The chain is Acyl-protein thioesterase 1 from Eremothecium gossypii (strain ATCC 10895 / CBS 109.51 / FGSC 9923 / NRRL Y-1056) (Yeast).